Consider the following 315-residue polypeptide: MPNLKAIRDQIQSVKNTKKITEAMRLVAAAKVRRAQEQVLCTRPFADALAQVLYNLQGRLAFSDVNLPLLAQREVKTVALLVVTGDRGLCGGYNTNVIRRAEQRMNELKEQGINYQLVVAGRKAAQYFERRNAPIAAKFINLEQIPTADEAGTIGDELLSLFLSETVDRVELIYTRFISLISATPVIQTLLPLTTQGLAVQDDEIFRLVTKEGKFKVQREKMASQPAQVFPQDMIFEQNPVQILDSLLPLYLNNQLLRALQESAASELAARMTAMSNASENASELIGTLSRTYNKARQAAITQELLEVVAGANAL.

The protein belongs to the ATPase gamma chain family. As to quaternary structure, F-type ATPases have 2 components, CF(1) - the catalytic core - and CF(0) - the membrane proton channel. CF(1) has five subunits: alpha(3), beta(3), gamma(1), delta(1), epsilon(1). CF(0) has three main subunits: a, b and c.

Its subcellular location is the cellular thylakoid membrane. Produces ATP from ADP in the presence of a proton gradient across the membrane. The gamma chain is believed to be important in regulating ATPase activity and the flow of protons through the CF(0) complex. The polypeptide is ATP synthase gamma chain (Microcystis aeruginosa (strain NIES-843 / IAM M-2473)).